Here is a 2202-residue protein sequence, read N- to C-terminus: Activating signal cointegrator 1 complex subunit 3 (2202 aa).

The required for interaction with ASCC2 stretch occupies residues 1 to 400 (MALPRLTGAL…RQRDADVEKI (400 aa)). The residue at position 12 (serine 12) is a Phosphoserine. 2 coiled-coil regions span residues 18–79 (KQDN…AAKQ) and 328–356 (IQSE…KAGE). Positions 486–669 (ETAYNTNENM…FLHVNPYIGL (184 aa)) constitute a Helicase ATP-binding 1 domain. 499 to 506 (APTGAGKT) contacts ATP. Residue lysine 572 is modified to N6-acetyllysine. The short motif at 611-614 (DEVH) is the DEVH box element. The 187-residue stretch at 728 to 914 (TVRTAMSLIE…GTVTNVEEAV (187 aa)) folds into the Helicase C-terminal 1 domain. Residues 978 to 1287 (STDLGRTASH…GAEAVCIINF (310 aa)) enclose the SEC63 1 domain. Positions 1336-1511 (HTLYHTDCNV…WLNIKQMGLF (176 aa)) constitute a Helicase ATP-binding 2 domain. Position 1349–1356 (1349–1356 (APTGSGKT)) interacts with ATP. Positions 1453 to 1456 (DEIH) match the DEIH box motif. The region spanning 1544–1739 (PAFQAIRSHS…VLSDHLNAEI (196 aa)) is the Helicase C-terminal 2 domain. Residues 1812–2176 (PLTYGRIASY…LGLDQQYDIY (365 aa)) form the SEC63 2 domain. Serine 2195 bears the Phosphoserine mark.

Belongs to the helicase family. As to quaternary structure, identified in the ASCC complex that contains ASCC1, ASCC2 and ASCC3. Functions as scaffolding subunit that interacts directly with both ASCC1 and ASCC2. Interacts directly with ALKBH3, and thereby recruits ALKBH3 to the ASCC complex. Part of the ASC-1/TRIP4 complex, that contains TRIP4, ASCC1, ASCC2 and ASCC3. Part of the RQT (ribosome quality control trigger) complex, that contains ASCC2, ASCC3 and TRIP4. Associates with ribosomes; recruited to collided ribosomes. Interacts with ZCCHC4. Interacts with ZNF598. Interacts with RPS3. In terms of tissue distribution, ubiquitous.

It localises to the nucleus. The protein localises to the nucleus speckle. It is found in the cytoplasm. The protein resides in the cytosol. It carries out the reaction Couples ATP hydrolysis with the unwinding of duplex DNA by translocating in the 3'-5' direction.. It catalyses the reaction ATP + H2O = ADP + phosphate + H(+). Its function is as follows. ATPase involved both in DNA repair and rescue of stalled ribosomes. 3'-5' DNA helicase involved in repair of alkylated DNA: promotes DNA unwinding to generate single-stranded substrate needed for ALKBH3, enabling ALKBH3 to process alkylated N3-methylcytosine (3mC) within double-stranded regions. Also involved in activation of the ribosome quality control (RQC) pathway, a pathway that degrades nascent peptide chains during problematic translation. Drives the splitting of stalled ribosomes that are ubiquitinated in a ZNF598-dependent manner, as part of the ribosome quality control trigger (RQT) complex. Part of the ASC-1 complex that enhances NF-kappa-B, SRF and AP1 transactivation. This chain is Activating signal cointegrator 1 complex subunit 3 (ASCC3), found in Homo sapiens (Human).